Here is a 198-residue protein sequence, read N- to C-terminus: Holliday junction branch migration complex subunit RuvA (198 aa).

The domain I stretch occupies residues 1-63 (MYDYIKGQLT…EDAQLLFGFH (63 aa)). Residues 64–142 (SEEEKDVFLK…EAPKEESSKP (79 aa)) are domain II. The segment at 143–147 (PKAKQ) is flexible linker. A domain III region spans residues 148 to 198 (QGNEQLDEAVEALLALGYKATELKKIRAFFEGTSETAEQYIKSALKMLMKG).

The protein belongs to the RuvA family. In terms of assembly, homotetramer. Forms an RuvA(8)-RuvB(12)-Holliday junction (HJ) complex. HJ DNA is sandwiched between 2 RuvA tetramers; dsDNA enters through RuvA and exits via RuvB. An RuvB hexamer assembles on each DNA strand where it exits the tetramer. Each RuvB hexamer is contacted by two RuvA subunits (via domain III) on 2 adjacent RuvB subunits; this complex drives branch migration. In the full resolvosome a probable DNA-RuvA(4)-RuvB(12)-RuvC(2) complex forms which resolves the HJ.

It is found in the cytoplasm. Its function is as follows. The RuvA-RuvB-RuvC complex processes Holliday junction (HJ) DNA during genetic recombination and DNA repair, while the RuvA-RuvB complex plays an important role in the rescue of blocked DNA replication forks via replication fork reversal (RFR). RuvA specifically binds to HJ cruciform DNA, conferring on it an open structure. The RuvB hexamer acts as an ATP-dependent pump, pulling dsDNA into and through the RuvAB complex. HJ branch migration allows RuvC to scan DNA until it finds its consensus sequence, where it cleaves and resolves the cruciform DNA. This is Holliday junction branch migration complex subunit RuvA from Streptococcus equi subsp. zooepidemicus (strain H70).